Consider the following 240-residue polypeptide: Homeobox protein goosecoid (240 aa).

The homeobox DNA-binding region spans 146 to 205; sequence KRRHRTIFTDEQLEALENLFQETKYPDVGTREQLARKVHLREEKVEVWFKNRRAKWRRQK. The interval 199-240 is disordered; it reads AKWRRQKRSSSEESENSQKWNKSTKTTSEKIEEGKSDVDSDS. Basic and acidic residues predominate over residues 225-240; that stretch reads TSEKIEEGKSDVDSDS.

It belongs to the paired homeobox family. Bicoid subfamily.

Its subcellular location is the nucleus. In Danio rerio (Zebrafish), this protein is Homeobox protein goosecoid (gsc).